The primary structure comprises 170 residues: Small ribosomal subunit protein mS25 (170 aa).

The protein belongs to the mitochondrion-specific ribosomal protein mS25 family. Component of the mitochondrial ribosome small subunit (28S) which comprises a 12S rRNA and about 30 distinct proteins.

The protein resides in the mitochondrion. The sequence is that of Small ribosomal subunit protein mS25 (mrps-25) from Caenorhabditis elegans.